Here is a 147-residue protein sequence, read N- to C-terminus: Hemoglobin anodic subunit beta (147 aa).

The 146-residue stretch at 2–147 (EWTEDERTAI…VTSALARQYH (146 aa)) folds into the Globin domain. 2 residues coordinate heme b: histidine 63 and histidine 92.

It belongs to the globin family. In terms of assembly, heterotetramer of two alpha chains and two beta chains. Red blood cells.

Involved in oxygen transport from gills to the various peripheral tissues. The chain is Hemoglobin anodic subunit beta (hbb1) from Anguilla anguilla (European freshwater eel).